We begin with the raw amino-acid sequence, 196 residues long: GTP cyclohydrolase 1 (196 aa).

Residues Cys84, His87, and Cys157 each coordinate Zn(2+).

Belongs to the GTP cyclohydrolase I family. In terms of assembly, toroid-shaped homodecamer, composed of two pentamers of five dimers.

The enzyme catalyses GTP + H2O = 7,8-dihydroneopterin 3'-triphosphate + formate + H(+). It functions in the pathway cofactor biosynthesis; 7,8-dihydroneopterin triphosphate biosynthesis; 7,8-dihydroneopterin triphosphate from GTP: step 1/1. The protein is GTP cyclohydrolase 1 of Corynebacterium glutamicum (strain ATCC 13032 / DSM 20300 / JCM 1318 / BCRC 11384 / CCUG 27702 / LMG 3730 / NBRC 12168 / NCIMB 10025 / NRRL B-2784 / 534).